We begin with the raw amino-acid sequence, 111 residues long: Translation initiation factor 1A 1 (111 aa).

The segment at 1–26 (MTLADLKKPTSRATPSTEETFTRVRT) is disordered. One can recognise an S1-like domain in the interval 22–96 (TRVRTPRREN…EKADVIWKYT (75 aa)).

It belongs to the eIF-1A family.

Functionally, seems to be required for maximal rate of protein biosynthesis. Enhances ribosome dissociation into subunits and stabilizes the binding of the initiator Met-tRNA(I) to 40 S ribosomal subunits. The chain is Translation initiation factor 1A 1 (eIF1A1) from Methanosarcina acetivorans (strain ATCC 35395 / DSM 2834 / JCM 12185 / C2A).